The primary structure comprises 190 residues: dCTP deaminase (190 aa).

113–118 serves as a coordination point for dCTP; sequence KSTYAR. Glutamate 139 acts as the Proton donor/acceptor in catalysis. Residues glutamine 158, tyrosine 172, lysine 181, and glutamine 182 each contribute to the dCTP site.

It belongs to the dCTP deaminase family. Homotrimer.

The enzyme catalyses dCTP + H2O + H(+) = dUTP + NH4(+). It participates in pyrimidine metabolism; dUMP biosynthesis; dUMP from dCTP (dUTP route): step 1/2. Functionally, catalyzes the deamination of dCTP to dUTP. The chain is dCTP deaminase from Chlamydia trachomatis serovar L2 (strain ATCC VR-902B / DSM 19102 / 434/Bu).